We begin with the raw amino-acid sequence, 418 residues long: F-box/LRR-repeat protein 14 (418 aa).

One can recognise an F-box domain in the interval 2-48 (ETHISCLFPELLAMIFGYLDVRDKGRAAQVCTAWRDAAYHKSVWRGV). Residues 2 to 48 (ETHISCLFPELLAMIFGYLDVRDKGRAAQVCTAWRDAAYHKSVWRGV) are required for down-regulation of SNAI1. LRR repeat units lie at residues 144–163 (GLEV…GLLL), 170–191 (RLKS…GHLA), 203–225 (GLEQ…HISR), 229–250 (GLRL…LHLS), and 254–275 (SLRS…MHLA).

As to quaternary structure, part of a SCF (SKP1-cullin-F-box) ubiquitin-protein ligase complex. Interacts with SKP1 and CUL1. Interacts with SNAI1; the interaction requires the phosphorylation of the two serine residues in the substrate destruction motif D-S-G-X(2,3,4)-S.

It is found in the cytoplasm. Functionally, substrate-recognition component of some SCF (SKP1-CUL1-F-box protein)-type E3 ubiquitin-protein ligase complexes. The SCF(FBXL14) complex acts by mediating ubiquitination and subsequent degradation of SNAI1. The protein is F-box/LRR-repeat protein 14 (FBXL14) of Homo sapiens (Human).